Reading from the N-terminus, the 213-residue chain is Maleamate amidohydrolase (213 aa).

The Nucleophile role is filled by cysteine 154.

Belongs to the isochorismatase family.

It carries out the reaction maleamate + H2O = maleate + NH4(+). The protein operates within cofactor degradation; nicotinate degradation. Its function is as follows. Maleamate amidase that transforms maleamate into maleate and ammonia in the aerobic nicotinate degradation pathway. The sequence is that of Maleamate amidohydrolase (nicF) from Pseudomonas putida (strain ATCC 47054 / DSM 6125 / CFBP 8728 / NCIMB 11950 / KT2440).